Consider the following 647-residue polypeptide: Phosphatidylinositol polyphosphate 5-phosphatase type IV (647 aa).

Disordered stretches follow at residues 1-80 (MPSK…QPPI), 101-131 (RGSQ…PAYS), and 177-196 (HRDA…HASH). The stretch at 52-55 (PMPP) is repeat 1. Residues 52 to 243 (PMPPFSIPAK…AHSNLGPSRP (192 aa)) are 3 X 4 AA repeats of P-X-X-P. Over residues 60-75 (AKTSNQNPQTKANLIT) the composition is skewed to polar residues. Residues 76–79 (PQPP) form repeat 2. At serine 103 the chain carries Phosphoserine. Residues 120 to 129 (LQDSVAQSPA) are compositionally biased toward polar residues. Threonine 197 carries the post-translational modification Phosphothreonine. Repeat 3 spans residues 240-243 (PSRP). A phosphoserine mark is found at serine 245 and serine 259. Cysteine 644 bears the Cysteine methyl ester mark. Cysteine 644 is lipidated: S-farnesyl cysteine. The propeptide at 645-647 (TVS) is removed in mature form.

The protein belongs to the inositol polyphosphate 5-phosphatase family. Interacts (when prenylated) with PDE6D; this is important for normal location in cilia. Highly expressed in testis, in pachytene and diplotene spermatocytes, but not in more mature elongating spermatids. Detected in neurons throughout the brain.

It localises to the cytoplasm. The protein resides in the cytoskeleton. The protein localises to the cilium axoneme. It is found in the golgi apparatus. Its subcellular location is the golgi stack membrane. It localises to the cell projection. The protein resides in the ruffle. The protein localises to the cell membrane. It is found in the nucleus. The catalysed reaction is a 1,2-diacyl-sn-glycero-3-phospho-(1D-myo-inositol-4,5-bisphosphate) + H2O = a 1,2-diacyl-sn-glycero-3-phospho-(1D-myo-inositol 4-phosphate) + phosphate. It catalyses the reaction a 1,2-diacyl-sn-glycero-3-phospho-(1D-myo-inositol-3,4,5-trisphosphate) + H2O = a 1,2-diacyl-sn-glycero-3-phospho-(1D-myo-inositol-3,4-bisphosphate) + phosphate. It carries out the reaction a 1,2-diacyl-sn-glycero-3-phospho-(1D-myo-inositol-3,5-bisphosphate) + H2O = a 1,2-diacyl-sn-glycero-3-phospho-(1D-myo-inositol-3-phosphate) + phosphate. In terms of biological role, phosphatidylinositol (PtdIns) phosphatase that specifically hydrolyzes the 5-phosphate of phosphatidylinositol-3,4,5-trisphosphate (PtdIns(3,4,5)P3), phosphatidylinositol 4,5-bisphosphate (PtdIns(4,5)P2) and phosphatidylinositol 3,5-bisphosphate (PtdIns(3,5)P2). Specific for lipid substrates, inactive towards water soluble inositol phosphates. Specific for lipid substrates, inactive towards water soluble inositol phosphates. Plays an essential role in the primary cilium by controlling ciliary growth and phosphoinositide 3-kinase (PI3K) signaling and stability. The polypeptide is Phosphatidylinositol polyphosphate 5-phosphatase type IV (Inpp5e) (Mus musculus (Mouse)).